The following is a 496-amino-acid chain: Maturase K (496 aa).

The protein belongs to the intron maturase 2 family. MatK subfamily.

It is found in the plastid. Its subcellular location is the chloroplast. In terms of biological role, usually encoded in the trnK tRNA gene intron. Probably assists in splicing its own and other chloroplast group II introns. The protein is Maturase K of Paeonia lactiflora (Chinese peony).